The following is a 335-amino-acid chain: Nonaprenyl diphosphate synthase (335 aa).

Isopentenyl diphosphate-binding residues include K57, R60, and H90. Residues D97 and D101 each coordinate Mg(2+). Residues 97–101 (DDVMD) carry the DDXXD motif motif. R107 is an isopentenyl diphosphate binding site. The DDXXD motif motif lies at 223–227 (DDIID).

The protein belongs to the FPP/GGPP synthase family. Mg(2+) serves as cofactor.

The enzyme catalyses isopentenyl diphosphate + (2E)-geranyl diphosphate = (2E,6E)-farnesyl diphosphate + diphosphate. It catalyses the reaction isopentenyl diphosphate + (2E,6E)-farnesyl diphosphate = (2E,6E,10E)-geranylgeranyl diphosphate + diphosphate. The catalysed reaction is 5 isopentenyl diphosphate + (2E,6E,10E)-geranylgeranyl diphosphate = all-trans-nonaprenyl diphosphate + 5 diphosphate. It participates in isoprenoid biosynthesis; farnesyl diphosphate biosynthesis; farnesyl diphosphate from geranyl diphosphate and isopentenyl diphosphate. It functions in the pathway isoprenoid biosynthesis; geranylgeranyl diphosphate biosynthesis; geranylgeranyl diphosphate from farnesyl diphosphate and isopentenyl diphosphate: step 1/1. In terms of biological role, catalyzes the sequential condensations of isopentenyl pyrophosphate (IPP) with geranyl diphosphate (GPP) to yield (2E,6E)-farnesyl diphosphate (E,E-FPP), with E,E-FPP to yield geranylgeranyl diphosphate (GGPP) and with GGPP to yield nonaprenyl diphosphate. May also have weak activity with dimethylallyl diphosphate (DMAPP). The protein is Nonaprenyl diphosphate synthase of Mycobacterium tuberculosis (strain ATCC 25618 / H37Rv).